The following is a 375-amino-acid chain: GDP-mannose transporter GONST2 (375 aa).

9 consecutive transmembrane segments (helical) span residues 79–99 (LVSGAAYCISSCSMIILNKIV), 112–132 (MLYQNLISCLVVAVLDISGVV), 141–161 (LIRVWMPVNVIFVGMLVSGMY), 165–185 (YINVAMVTILKNATNILTGIG), 199–219 (WAAMFMMIISAISGGITDLTF), 262–282 (MVLLNNLLSIPFGIILIILLG), 300–320 (VVATASGFLGLAISFTSMWFL), 327–347 (TYSLVGSLNKVPISLAGLVLF), and 349–369 (VPLSLPNLFSILFGLFAGVVF).

The protein belongs to the nucleotide-sugar transporter family. GDP-Mannose:GMP antiporter (GMA) (TC 2.A.7.13) subfamily. Expressed in rosette leaves, stems, flowers and siliques.

Its subcellular location is the golgi apparatus membrane. Its function is as follows. GDP-mannose transporter that may be involved in the import of GDP-mannose from the cytoplasm into the Golgi lumen. The polypeptide is GDP-mannose transporter GONST2 (Arabidopsis thaliana (Mouse-ear cress)).